We begin with the raw amino-acid sequence, 336 residues long: 3-isopropylmalate dehydrogenase (336 aa).

Residues Arg87, Arg97, Arg121, and Asp211 each contribute to the substrate site. Residues Asp211, Asp235, and Asp239 each coordinate Mg(2+). 271 to 283 (GSAPDIAGQGIAD) lines the NAD(+) pocket.

It belongs to the isocitrate and isopropylmalate dehydrogenases family. LeuB type 2 subfamily. Homodimer. Mg(2+) is required as a cofactor. Requires Mn(2+) as cofactor.

The protein localises to the cytoplasm. It carries out the reaction (2R,3S)-3-isopropylmalate + NAD(+) = 4-methyl-2-oxopentanoate + CO2 + NADH. It participates in amino-acid biosynthesis; L-leucine biosynthesis; L-leucine from 3-methyl-2-oxobutanoate: step 3/4. In terms of biological role, catalyzes the oxidation of 3-carboxy-2-hydroxy-4-methylpentanoate (3-isopropylmalate) to 3-carboxy-4-methyl-2-oxopentanoate. The product decarboxylates to 4-methyl-2 oxopentanoate. In Mycobacterium sp. (strain JLS), this protein is 3-isopropylmalate dehydrogenase.